The chain runs to 72 residues: UPF0270 protein YheU (72 aa).

It belongs to the UPF0270 family.

The protein is UPF0270 protein YheU of Shigella flexneri serotype 5b (strain 8401).